A 284-amino-acid chain; its full sequence is GTP cyclohydrolase MptA (284 aa).

The protein belongs to the GTP cyclohydrolase IV family. As to quaternary structure, homodimer. Requires Fe(2+) as cofactor.

The catalysed reaction is GTP + H2O = 7,8-dihydroneopterin 2',3'-cyclic phosphate + formate + diphosphate + H(+). It functions in the pathway cofactor biosynthesis; 5,6,7,8-tetrahydromethanopterin biosynthesis. Its function is as follows. Converts GTP to 7,8-dihydro-D-neopterin 2',3'-cyclic phosphate, the first intermediate in the biosynthesis of coenzyme methanopterin. This Thermoplasma volcanium (strain ATCC 51530 / DSM 4299 / JCM 9571 / NBRC 15438 / GSS1) protein is GTP cyclohydrolase MptA.